The chain runs to 31 residues: Cytochrome b6-f complex subunit 6 (31 aa).

The helical transmembrane segment at 4–26 (ITSYFGFLLAALTVTSALFIGLS) threads the bilayer.

The protein belongs to the PetL family. As to quaternary structure, the 4 large subunits of the cytochrome b6-f complex are cytochrome b6, subunit IV (17 kDa polypeptide, PetD), cytochrome f and the Rieske protein, while the 4 small subunits are PetG, PetL, PetM and PetN. The complex functions as a dimer.

The protein localises to the plastid. It is found in the chloroplast thylakoid membrane. In terms of biological role, component of the cytochrome b6-f complex, which mediates electron transfer between photosystem II (PSII) and photosystem I (PSI), cyclic electron flow around PSI, and state transitions. PetL is important for photoautotrophic growth as well as for electron transfer efficiency and stability of the cytochrome b6-f complex. The polypeptide is Cytochrome b6-f complex subunit 6 (Daucus carota (Wild carrot)).